Here is a 282-residue protein sequence, read N- to C-terminus: Bifunctional protein FolD (282 aa).

NADP(+) contacts are provided by residues 165-167 (GAS) and Ile-231.

The protein belongs to the tetrahydrofolate dehydrogenase/cyclohydrolase family. As to quaternary structure, homodimer.

The catalysed reaction is (6R)-5,10-methylene-5,6,7,8-tetrahydrofolate + NADP(+) = (6R)-5,10-methenyltetrahydrofolate + NADPH. The enzyme catalyses (6R)-5,10-methenyltetrahydrofolate + H2O = (6R)-10-formyltetrahydrofolate + H(+). It functions in the pathway one-carbon metabolism; tetrahydrofolate interconversion. Its function is as follows. Catalyzes the oxidation of 5,10-methylenetetrahydrofolate to 5,10-methenyltetrahydrofolate and then the hydrolysis of 5,10-methenyltetrahydrofolate to 10-formyltetrahydrofolate. The sequence is that of Bifunctional protein FolD from Francisella philomiragia subsp. philomiragia (strain ATCC 25017 / CCUG 19701 / FSC 153 / O#319-036).